Here is a 287-residue protein sequence, read N- to C-terminus: Protease HtpX (287 aa).

2 helical membrane-spanning segments follow: residues 4-24 (IFLLIATNLAVLLVASIVMSI) and 33-53 (GGLLVFAAIFGFGGAFISLAI). Histidine 139 contributes to the Zn(2+) binding site. Glutamate 140 is an active-site residue. Histidine 143 contacts Zn(2+). 2 consecutive transmembrane segments (helical) span residues 154–174 (LIQGVVNTFVIFAARVVAGII) and 195–215 (AVVFVLDMLFGILASIIVAYF). Glutamate 220 is a binding site for Zn(2+).

Belongs to the peptidase M48B family. Zn(2+) serves as cofactor.

The protein localises to the cell inner membrane. The protein is Protease HtpX of Shewanella putrefaciens (strain CN-32 / ATCC BAA-453).